Here is a 200-residue protein sequence, read N- to C-terminus: Holliday junction branch migration complex subunit RuvA (200 aa).

A domain I region spans residues 1-63 (MIALVQGRVA…EDSLTLFGFA (63 aa)). Residues 64–138 (DADERDVFEL…DRLGPAQGAA (75 aa)) form a domain II region. Residues 138–142 (APAAP) are flexible linker. The interval 143 to 200 (VAVDDGADVVDALVGLGWPVRQAQDAVRGVLEDADGTAPDAAGLLRAALRSLAGDARG) is domain III.

Belongs to the RuvA family. Homotetramer. Forms an RuvA(8)-RuvB(12)-Holliday junction (HJ) complex. HJ DNA is sandwiched between 2 RuvA tetramers; dsDNA enters through RuvA and exits via RuvB. An RuvB hexamer assembles on each DNA strand where it exits the tetramer. Each RuvB hexamer is contacted by two RuvA subunits (via domain III) on 2 adjacent RuvB subunits; this complex drives branch migration. In the full resolvosome a probable DNA-RuvA(4)-RuvB(12)-RuvC(2) complex forms which resolves the HJ.

It localises to the cytoplasm. Functionally, the RuvA-RuvB-RuvC complex processes Holliday junction (HJ) DNA during genetic recombination and DNA repair, while the RuvA-RuvB complex plays an important role in the rescue of blocked DNA replication forks via replication fork reversal (RFR). RuvA specifically binds to HJ cruciform DNA, conferring on it an open structure. The RuvB hexamer acts as an ATP-dependent pump, pulling dsDNA into and through the RuvAB complex. HJ branch migration allows RuvC to scan DNA until it finds its consensus sequence, where it cleaves and resolves the cruciform DNA. This is Holliday junction branch migration complex subunit RuvA from Beutenbergia cavernae (strain ATCC BAA-8 / DSM 12333 / CCUG 43141 / JCM 11478 / NBRC 16432 / NCIMB 13614 / HKI 0122).